The primary structure comprises 352 residues: Cell division protein ZipA (352 aa).

At 1-5 the chain is on the periplasmic side; it reads MQELR. A helical membrane pass occupies residues 6-26; it reads LVLIIVGALAISALLLHGLWT. Over 27-352 the chain is Cytoplasmic; that stretch reads SRKEKPAKFG…REKAKLYSQA (326 aa). Residues 35–54 show a composition bias toward basic and acidic residues; that stretch reads FGEKPLGKLDDSNRDTEGFD. The interval 35–56 is disordered; that stretch reads FGEKPLGKLDDSNRDTEGFDHT.

The protein belongs to the ZipA family. Interacts with FtsZ via their C-terminal domains.

It localises to the cell inner membrane. Functionally, essential cell division protein that stabilizes the FtsZ protofilaments by cross-linking them and that serves as a cytoplasmic membrane anchor for the Z ring. Also required for the recruitment to the septal ring of downstream cell division proteins. The protein is Cell division protein ZipA of Photobacterium profundum (strain SS9).